We begin with the raw amino-acid sequence, 123 residues long: U11/U12 small nuclear ribonucleoprotein 25 kDa protein (123 aa).

Positions 32–123 (MTVRVCKMDG…VSFIKKLRQK (92 aa)) constitute a Ubiquitin-like domain.

As to quaternary structure, component of the U11/U12 snRNPs that are part of the U12-type spliceosome.

It is found in the nucleus. The protein is U11/U12 small nuclear ribonucleoprotein 25 kDa protein (SNRNP25) of Bos taurus (Bovine).